The primary structure comprises 623 residues: uncharacterized protein (623 aa).

The stretch at 256–351 forms a coiled coil; it reads AEEKLLSKNK…EEIHGLKKKN (96 aa). Disordered stretches follow at residues 417–485 and 497–536; these read NRRN…SPSS and ALSS…ECAT. Positions 422–431 are enriched in polar residues; sequence LESVPFNTLS. Positions 452–481 are enriched in basic and acidic residues; it reads ELKKPAESYGDETKKPNQHNKDGSIDEKPK.

This is an uncharacterized protein from Arabidopsis thaliana (Mouse-ear cress).